The chain runs to 161 residues: SsrA-binding protein (161 aa).

Belongs to the SmpB family.

It localises to the cytoplasm. In terms of biological role, required for rescue of stalled ribosomes mediated by trans-translation. Binds to transfer-messenger RNA (tmRNA), required for stable association of tmRNA with ribosomes. tmRNA and SmpB together mimic tRNA shape, replacing the anticodon stem-loop with SmpB. tmRNA is encoded by the ssrA gene; the 2 termini fold to resemble tRNA(Ala) and it encodes a 'tag peptide', a short internal open reading frame. During trans-translation Ala-aminoacylated tmRNA acts like a tRNA, entering the A-site of stalled ribosomes, displacing the stalled mRNA. The ribosome then switches to translate the ORF on the tmRNA; the nascent peptide is terminated with the 'tag peptide' encoded by the tmRNA and targeted for degradation. The ribosome is freed to recommence translation, which seems to be the essential function of trans-translation. The sequence is that of SsrA-binding protein from Baumannia cicadellinicola subsp. Homalodisca coagulata.